The sequence spans 372 residues: NAD(P)H-quinone oxidoreductase subunit 1 (372 aa).

The next 8 helical transmembrane spans lie at 27–47, 97–117, 128–148, 176–196, 204–224, 266–286, 308–328, and 347–367; these read IIWL…GVLV, ILFT…WLIV, VGIG…GLLM, LALS…IDIV, ILSW…ICAL, ILSA…PIPV, SIGI…AILL, and FLLP…LAFP.

The protein belongs to the complex I subunit 1 family. In terms of assembly, NDH-1 is composed of at least 11 different subunits.

The protein localises to the cellular thylakoid membrane. It carries out the reaction a plastoquinone + NADH + (n+1) H(+)(in) = a plastoquinol + NAD(+) + n H(+)(out). It catalyses the reaction a plastoquinone + NADPH + (n+1) H(+)(in) = a plastoquinol + NADP(+) + n H(+)(out). Its function is as follows. NDH-1 shuttles electrons from an unknown electron donor, via FMN and iron-sulfur (Fe-S) centers, to quinones in the respiratory and/or the photosynthetic chain. The immediate electron acceptor for the enzyme in this species is believed to be plastoquinone. Couples the redox reaction to proton translocation, and thus conserves the redox energy in a proton gradient. This Prochlorococcus marinus subsp. pastoris (strain CCMP1986 / NIES-2087 / MED4) protein is NAD(P)H-quinone oxidoreductase subunit 1.